Consider the following 83-residue polypeptide: Small ribosomal subunit protein bS16 (83 aa).

It belongs to the bacterial ribosomal protein bS16 family.

The polypeptide is Small ribosomal subunit protein bS16 (Stutzerimonas stutzeri (strain A1501) (Pseudomonas stutzeri)).